A 208-amino-acid chain; its full sequence is dITP/XTP pyrophosphatase (208 aa).

16-21 (SNNKGK) lines the substrate pocket. Aspartate 79 serves as the catalytic Proton acceptor. Aspartate 79 is a binding site for Mg(2+). Substrate contacts are provided by residues serine 80, 166-169 (FGYD), lysine 189, and 194-195 (HR).

This sequence belongs to the HAM1 NTPase family. As to quaternary structure, homodimer. Requires Mg(2+) as cofactor.

It carries out the reaction XTP + H2O = XMP + diphosphate + H(+). It catalyses the reaction dITP + H2O = dIMP + diphosphate + H(+). The enzyme catalyses ITP + H2O = IMP + diphosphate + H(+). Pyrophosphatase that catalyzes the hydrolysis of nucleoside triphosphates to their monophosphate derivatives, with a high preference for the non-canonical purine nucleotides XTP (xanthosine triphosphate), dITP (deoxyinosine triphosphate) and ITP. Seems to function as a house-cleaning enzyme that removes non-canonical purine nucleotides from the nucleotide pool, thus preventing their incorporation into DNA/RNA and avoiding chromosomal lesions. This Acinetobacter baumannii (strain AB307-0294) protein is dITP/XTP pyrophosphatase.